A 353-amino-acid polypeptide reads, in one-letter code: Rhodopsin (353 aa).

The Extracellular segment spans residues 1–36 (MNGTEGENFYIPFSNKTGLARSPFEYPQYYLAEPWK). Asn-2 and Asn-15 each carry an N-linked (GlcNAc...) asparagine glycan. A helical transmembrane segment spans residues 37-61 (YSVLAAYMFFLILVGFPVNFLTLFV). Residues 62-73 (TVQHKKLRTPLN) are Cytoplasmic-facing. A helical membrane pass occupies residues 74 to 96 (YILLNLAVANLFMVLFGFTLTMY). At 97 to 110 (SSMNGYFVFGPTMC) the chain is on the extracellular side. A disulfide bond links Cys-110 and Cys-187. A helical membrane pass occupies residues 111–133 (NFEGFFATLGGEMSLWSLVVLAI). A 'Ionic lock' involved in activated form stabilization motif is present at residues 134–136 (ERY). The Cytoplasmic portion of the chain corresponds to 134 to 152 (ERYIVICKPMGNFRFGSTH). A helical transmembrane segment spans residues 153–173 (AYMGVAFTWFMALSCAAPPLV). Residues 174–202 (GWSRYLPEGMQCSCGPDYYTLNPNFNNES) lie on the Extracellular side of the membrane. A helical membrane pass occupies residues 203–224 (FVIYMFLVHFIIPFIVIFFCYG). Residues 225–252 (RLLCTVKEAAAAQQESASTQKAEKEVTR) lie on the Cytoplasmic side of the membrane. The chain crosses the membrane as a helical span at residues 253-274 (MVVLMVIGFLVCWVPYASVAFY). The Extracellular portion of the chain corresponds to 275 to 286 (IFTHQGSDFGAT). Residues 287 to 308 (FMTVPAFFAKTSALYNPIIYIL) form a helical membrane-spanning segment. N6-(retinylidene)lysine is present on Lys-296. Over 309–353 (MNKQFRNCMITTLCCGKNPLGDEDSGASTSKTEVSSVSTSQVSPA) the chain is Cytoplasmic. The segment at 330–353 (DEDSGASTSKTEVSSVSTSQVSPA) is disordered. The span at 336–353 (STSKTEVSSVSTSQVSPA) shows a compositional bias: low complexity.

This sequence belongs to the G-protein coupled receptor 1 family. Opsin subfamily. Phosphorylated on some or all of the serine and threonine residues present in the C-terminal region. Post-translationally, contains one covalently linked retinal chromophore.

The protein localises to the membrane. It localises to the cell projection. It is found in the cilium. The protein resides in the photoreceptor outer segment. Photoreceptor required for image-forming vision at low light intensity. While most salt water fish species use retinal as chromophore, most freshwater fish use 3-dehydroretinal, or a mixture of retinal and 3-dehydroretinal. Light-induced isomerization of 11-cis to all-trans retinal triggers a conformational change that activates signaling via G-proteins. Subsequent receptor phosphorylation mediates displacement of the bound G-protein alpha subunit by arrestin and terminates signaling. In Petromyzon marinus (Sea lamprey), this protein is Rhodopsin (RHO).